Consider the following 323-residue polypeptide: Ribosomal protein L11 methyltransferase (323 aa).

S-adenosyl-L-methionine-binding residues include T160, G184, D206, and N257.

It belongs to the methyltransferase superfamily. PrmA family.

Its subcellular location is the cytoplasm. The enzyme catalyses L-lysyl-[protein] + 3 S-adenosyl-L-methionine = N(6),N(6),N(6)-trimethyl-L-lysyl-[protein] + 3 S-adenosyl-L-homocysteine + 3 H(+). Methylates ribosomal protein L11. The chain is Ribosomal protein L11 methyltransferase from Agathobacter rectalis (strain ATCC 33656 / DSM 3377 / JCM 17463 / KCTC 5835 / VPI 0990) (Eubacterium rectale).